Consider the following 555-residue polypeptide: Urocanate hydratase (555 aa).

NAD(+) contacts are provided by residues 52–53 (GG), glutamine 130, 176–178 (GMG), glutamate 196, arginine 201, 242–243 (NA), 263–267 (QTSAH), 273–274 (YL), and tyrosine 322. Residue cysteine 410 is part of the active site. Glycine 492 serves as a coordination point for NAD(+).

This sequence belongs to the urocanase family. NAD(+) is required as a cofactor.

The protein resides in the cytoplasm. It carries out the reaction 4-imidazolone-5-propanoate = trans-urocanate + H2O. It participates in amino-acid degradation; L-histidine degradation into L-glutamate; N-formimidoyl-L-glutamate from L-histidine: step 2/3. Functionally, catalyzes the conversion of urocanate to 4-imidazolone-5-propionate. The protein is Urocanate hydratase of Shewanella putrefaciens (strain CN-32 / ATCC BAA-453).